The following is a 232-amino-acid chain: Platelet-activating factor acetylhydrolase IB subunit alpha1 (232 aa).

The interval 1–20 (MSGEGENPASKPTPVQDVQG) is disordered. Serine 2 carries the N-acetylserine modification. Serine 2 is subject to Phosphoserine. Residues serine 48, aspartate 193, and histidine 196 contribute to the active site.

This sequence belongs to the 'GDSL' lipolytic enzyme family. Platelet-activating factor acetylhydrolase IB beta/gamma subunits subfamily. As to quaternary structure, forms a catalytic dimer which is either homodimer (alpha1/alpha1 homodimer) or heterodimer with PAFAH1B2 (alpha1/alpha2 heterodimer). Component of the cytosolic (PAF-AH (I)) heterotetrameric enzyme, which is composed of PAFAH1B1 (beta), PAFAH1B2 (alpha2) and PAFAH1B3 (alpha1) subunits. The catalytic activity of the enzyme resides in the alpha1 (PAFAH1B3) and alpha2 (PAFAH1B2) subunits, whereas the beta subunit (PAFAH1B1) has regulatory activity. Trimer formation is not essential for the catalytic activity. Interacts with VLDLR; this interaction may modulate the Reelin pathway.

Its subcellular location is the cytoplasm. It carries out the reaction a 1-O-alkyl-2-acetyl-sn-glycero-3-phosphocholine + H2O = a 1-O-alkyl-sn-glycero-3-phosphocholine + acetate + H(+). It catalyses the reaction 1-O-hexadecyl-2-acetyl-sn-glycero-3-phosphocholine + H2O = 1-O-hexadecyl-sn-glycero-3-phosphocholine + acetate + H(+). The enzyme catalyses 1-O-hexadecyl-2-acetyl-sn-glycero-3-phosphate + H2O = 1-O-hexadecyl-sn-glycero-3-phosphate + acetate + H(+). With respect to regulation, beta subunit (PAFAH1B1) inhibits the acetylhydrolase activity of the alpha1/alpha1 catalytic homodimer. In terms of biological role, alpha1 catalytic subunit of the cytosolic type I platelet-activating factor (PAF) acetylhydrolase (PAF-AH (I)) heterotetrameric enzyme that catalyzes the hydrolyze of the acetyl group at the sn-2 position of PAF and its analogs and modulates the action of PAF. The activity and substrate specificity of PAF-AH (I) are affected by its subunit composition. Both alpha1/alpha1 homodimer (PAFAH1B3/PAFAH1B3 homodimer) and alpha1/alpha2 heterodimer(PAFAH1B3/PAFAH1B2 heterodimer) hydrolyze 1-O-alkyl-2-acetyl-sn-glycero-3-phosphoric acid (AAGPA) more efficiently than PAF, but they have little hydrolytic activity towards 1-O-alkyl-2-acetyl-sn-glycero-3-phosphorylethanolamine (AAGPE). Plays an important role during the development of brain. The protein is Platelet-activating factor acetylhydrolase IB subunit alpha1 of Mus musculus (Mouse).